The primary structure comprises 281 residues: MNIADGRQAFPAPAKLNLDLRITGRREDGYHNIESIFCLIDLQDTVYLKPRDDGKIILHNPVGGIPQEADLSYRAASLLQKYARNPAGVEIWLDKKIPTGAGLGGGSSDAATVLLVLNRWWQCSRTTQQLIDLGATLGADVPFFIFGKNAFASGIGEKLIGMDIPKQWYVIVKPPVHVSTAKIFTHEGLTRNSASSIMPTFQNLQPFRNDMQAVVFKEYPEVWKAYSELSRYGFALMTGSGACVFTACQDRDSAYNIYRQVSGLYEAYLAEGLSKHPLLSV.

Residue K15 is part of the active site. ATP is bound at residue 98–108 (PTGAGLGGGSS). The active site involves D140.

It belongs to the GHMP kinase family. IspE subfamily.

It carries out the reaction 4-CDP-2-C-methyl-D-erythritol + ATP = 4-CDP-2-C-methyl-D-erythritol 2-phosphate + ADP + H(+). It participates in isoprenoid biosynthesis; isopentenyl diphosphate biosynthesis via DXP pathway; isopentenyl diphosphate from 1-deoxy-D-xylulose 5-phosphate: step 3/6. In terms of biological role, catalyzes the phosphorylation of the position 2 hydroxy group of 4-diphosphocytidyl-2C-methyl-D-erythritol. The protein is 4-diphosphocytidyl-2-C-methyl-D-erythritol kinase of Neisseria meningitidis serogroup C (strain 053442).